The chain runs to 233 residues: Ribonuclease 3 (233 aa).

Positions 8–135 (AQRFLEDKQL…VIGAIYLDQG (128 aa)) constitute an RNase III domain. Glutamate 48 provides a ligand contact to Mg(2+). The active site involves aspartate 52. Positions 121 and 124 each coordinate Mg(2+). The active site involves glutamate 124. The 70-residue stretch at 161-230 (DYKSKLQELV…AQKVLQDNLV (70 aa)) folds into the DRBM domain.

Belongs to the ribonuclease III family. In terms of assembly, homodimer. Requires Mg(2+) as cofactor.

The protein localises to the cytoplasm. It catalyses the reaction Endonucleolytic cleavage to 5'-phosphomonoester.. Its function is as follows. Digests double-stranded RNA. Involved in the processing of primary rRNA transcript to yield the immediate precursors to the large and small rRNAs (23S and 16S). Processes some mRNAs, and tRNAs when they are encoded in the rRNA operon. Processes pre-crRNA and tracrRNA of type II CRISPR loci if present in the organism. The polypeptide is Ribonuclease 3 (Syntrophomonas wolfei subsp. wolfei (strain DSM 2245B / Goettingen)).